Here is a 279-residue protein sequence, read N- to C-terminus: Zinc-finger homeodomain protein 1 (279 aa).

Positions 1–30 (MEFEDNNNNNDEEQEEDMNLHEEEEDDDAV) are enriched in acidic residues. Residues 1 to 62 (MEFEDNNNNN…TTSTGGGGGF (62 aa)) form a disordered region. Residues 75–124 (FRECLKNQAVNIGGHAVDGCGEFMPAGIEGTIDALKCAACGCHRNFHRKE) form a ZF-HD dimerization-type zinc finger. Disordered regions lie at residues 128–199 (FHHA…TKFT) and 245–279 (NNKH…QDQP). The span at 134–143 (QHQPPPPPPG) shows a compositional bias: pro residues. Residues 191 to 254 (RKRHRTKFTA…NNKHTLGKSP (64 aa)) constitute a DNA-binding region (homeobox; atypical).

Homo- and heterodimer with other ZFHD proteins. Interacts with MIF1 and MIF2; these interactions prevent nuclear localization and DNA-binding to inhibit transcription regulation activity. Binds to ZHD2, ZHD3, ZHD4, ZHD5, ZHD6, ZHD7, ZHD8, ZHD9, ZHD10 and ZHD11. In terms of tissue distribution, mostly expressed in flowers and inflorescence.

The protein resides in the nucleus. Its function is as follows. Putative transcription factor. The polypeptide is Zinc-finger homeodomain protein 1 (ZHD1) (Arabidopsis thaliana (Mouse-ear cress)).